Reading from the N-terminus, the 494-residue chain is MKMLEQNPQYLYFFSLFLVTIFLYKWLTLKKTPLKNLPPSPPQYPIIGNLHQIGPDPQASLRDLAQKYGPLMFLKFGTVPVLVVSSADAAREALKTHDLVFADRPYSSVANKIFYNGKDMVFARYTEYWRQVKSICVTQLLSNKRVNSFHYVREEEVDLLVQNLENSHSKVANLTELLIEVTGNVVCRVSVGSGDKVDSYKILILEIMDMLGYSRSIEDFFPLLGWVDWLTGLRGKVAEAAKGVDTFLEGVLKEHLSTTGSKYNDFVSILLEIQEADAGSSMDNECIKSLIWDMLGAGTETISTALEWTLAALIKNPDAMFKLQNEVREIGKGKSKISEADLVKMNYLQAVMKESMRLYFTAPLLVPREARQDIKFMGYDISSGTQVLINAWAIARDPLLWDKPEEFRPERFLNSPIDYKGFHYEFLPFGAGRRGCPGIQFAMCINELVVANLVHKFNFELPDGKRLEDLDMTAASGITLRKKSPLLVVARPHV.

The chain crosses the membrane as a helical span at residues 12-29; sequence YFFSLFLVTIFLYKWLTL. C436 contacts heme.

Belongs to the cytochrome P450 family.

It is found in the endoplasmic reticulum membrane. It localises to the microsome membrane. The enzyme catalyses (7S)-marmesin + reduced [NADPH--hemoprotein reductase] + O2 = psoralen + acetone + oxidized [NADPH--hemoprotein reductase] + 2 H2O + H(+). Inhibited by columbianetin. Its function is as follows. Involved in linear furanocumarin (psoralen) biosynthesis. Converts marmesin to psoralen. This chain is Psoralen synthase (CYP71AJ1), found in Ammi majus (Bishop's weed).